We begin with the raw amino-acid sequence, 928 residues long: Diacylglycerol kinase zeta (928 aa).

The span at 1–14 (MEPRDGSPEARSSD) shows a compositional bias: basic and acidic residues. Disordered regions lie at residues 1–46 (MEPR…RRFP) and 59–82 (KSGLQHLAPPPPTPGAPCSESERQ). Residues 15–24 (SESASASSSG) show a composition bias toward low complexity. The span at 25-37 (SERDAGPEPDKAP) shows a compositional bias: basic and acidic residues. Phorbol-ester/DAG-type zinc fingers lie at residues 98–152 (HIWF…NFRC) and 172–230 (HHWV…EEPC). The interval 251–280 (PQNTLKASKKKKRASFKRKSSKKGPEEGRW) is disordered. Over residues 257–272 (ASKKKKRASFKRKSSK) the composition is skewed to basic residues. Positions 259 to 273 (KKKKRASFKRKSSKK) are MARCKS homology. Residues 278–416 (GRWRPFIIRP…HVEEGNVVQL (139 aa)) form a mediates interaction with RASGRP1 region. The DAGKc domain maps to 291 to 425 (PLMKPLLVFV…LDRWDLHAEP (135 aa)). The short motif at 361–369 (LSTLDQLRL) is the Nuclear export signal element. Position 705 is a phosphoserine (serine 705). The segment at 759 to 788 (ARPDLPTPTSPLPTSPCSPTPRSLQGDAAP) is disordered. The segment covering 763 to 777 (LPTPTSPLPTSPCSP) has biased composition (pro residues). Residue serine 781 is modified to Phosphoserine. ANK repeat units follow at residues 822 to 852 (QSRTLLHHAVSTGSKDVVRYLLDHAPPEILD) and 857 to 886 (NGETCLHQAAALGQRTICHYIVEAGASLMK). Residues 924-928 (QETAV) carry the PDZ-binding motif.

Belongs to the eukaryotic diacylglycerol kinase family. In terms of assembly, interacts (via PDZ-binding motif) with the PDZ domain of the syntrophin SNTG1 and that of SNX27. Interacts with IRS1 in the absence of insulin; insulin stimulation decreases this interaction. Found in a ternary complex with IRS1 and PIP5K1A in the absence of insulin. Interacts with PIP5K1A. Forms a signaling complex with RASGRP1 and HRAS. Phosphorylation of the MARCKS homology domain by PKC reduces nuclear accumulation of DGK-zeta. As to expression, highest levels in brain, and substantial levels in skeletal muscle, heart, and pancreas. Predominantly expressed in muscle.

It is found in the nucleus. It localises to the cytoplasm. The protein resides in the cytosol. Its subcellular location is the cell membrane. The protein localises to the cell projection. It is found in the lamellipodium. It carries out the reaction a 1,2-diacyl-sn-glycerol + ATP = a 1,2-diacyl-sn-glycero-3-phosphate + ADP + H(+). It catalyses the reaction a 1-O-alkyl-sn-glycerol + ATP = a 1-O-alkyl-sn-glycero-3-phosphate + ADP + H(+). The enzyme catalyses 1-O-alkyl-2-acyl-sn-glycerol + ATP = 1-O-alkyl-2-acyl-sn-glycero-3-phosphate + ADP + H(+). The catalysed reaction is 1,2-didecanoyl-sn-glycerol + ATP = 1,2-didecanoyl-sn-glycero-3-phosphate + ADP + H(+). It carries out the reaction 1,2-ditetradecanoyl-sn-glycerol + ATP = 1,2-ditetradecanoyl-sn-glycero-3-phosphate + ADP + H(+). It catalyses the reaction 1-hexadecanoyl-2-(9Z-octadecenoyl)-sn-glycerol + ATP = 1-hexadecanoyl-2-(9Z-octadecenoyl)-sn-glycero-3-phosphate + ADP + H(+). The enzyme catalyses 1-hexadecanoyl-2-(5Z,8Z,11Z,14Z-eicosatetraenoyl)-sn-glycerol + ATP = 1-hexadecanoyl-2-(5Z,8Z,11Z,14Z-eicosatetraenoyl)-sn-glycero-3-phosphate + ADP + H(+). The catalysed reaction is 1-octadecanoyl-2-(9Z-octadecenoyl)-sn-glycerol + ATP = 1-octadecanoyl-2-(9Z-octadecenoyl)-sn-glycero-3-phosphate + ADP + H(+). It carries out the reaction 1-octadecanoyl-2-(5Z,8Z,11Z,14Z-eicosatetraenoyl)-sn-glycerol + ATP = 1-octadecanoyl-2-(5Z,8Z,11Z,14Z-eicosatetraenoyl)-sn-glycero-3-phosphate + ADP + H(+). It catalyses the reaction 1-octadecanoyl-2-(4Z,7Z,10Z,13Z,16Z,19Z-docosahexaenoyl)-sn-glycerol + ATP = 1-octadecanoyl-2-(4Z,7Z,10Z,13Z,16Z,19Z-docosahexaenoyl)-sn-glycero-3-phosphate + ADP + H(+). The enzyme catalyses 1,2-di-(9Z-octadecenoyl)-sn-glycerol + ATP = 1,2-di-(9Z-octadecenoyl)-sn-glycero-3-phosphate + ADP + H(+). The catalysed reaction is 1-(9Z-octadecenoyl)-2-hexadecanoyl-sn-glycerol + ATP = 1-(9Z)-octadecenoyl-2-hexadecanoyl-sn-glycero-3-phosphate + ADP + H(+). It carries out the reaction 1-eicosanoyl-2-(5Z,8Z,11Z,14Z)-eicosatetraenoyl-sn-glycerol + ATP = 1-eicosanoyl-2-(5Z,8Z,11Z,14Z)-eicosatetraenoyl-sn-glycero-3-phosphate + ADP + H(+). It catalyses the reaction 1,2-di-(5Z,8Z,11Z,14Z)-eicosatetraenoyl-sn-glycerol + ATP = 1,2-di-(5Z,8Z,11Z,14Z)-eicosatetraenoyl-sn-glycero-3-phosphate + ADP + H(+). The enzyme catalyses 1-O-hexadecyl-2-acetyl-sn-glycerol + ATP = 1-O-hexadecyl-2-acetyl-sn-glycero-3-phosphate + ADP + H(+). The catalysed reaction is 1-O-hexadecyl-2-(5Z,8Z,11Z,14Z-eicosatetraenoyl)-sn-glycerol + ATP = 1-O-hexadecyl-2-(5Z,8Z,11Z,14Z-eicosatetraenoyl)-sn-glycero-3-phosphate + ADP + H(+). It carries out the reaction 1-O-hexadecyl-2-(9Z-octadecenoyl)-sn-glycerol + ATP = 1-O-hexadecyl-2-(9Z-octadecenoyl)-sn-glycero-3-phosphate + ADP + H(+). It catalyses the reaction 1-O-hexadecyl-sn-glycerol + ATP = 1-O-hexadecyl-sn-glycero-3-phosphate + ADP + H(+). It participates in lipid metabolism; glycerolipid metabolism. Activated by 1,2-diacyl-sn-glycero-3-phosphate/phosphatidic acid irrespective of its acyl chain composition. In terms of biological role, diacylglycerol kinase that converts diacylglycerol/DAG into phosphatidic acid/phosphatidate/PA and regulates the respective levels of these two bioactive lipids. Thereby, acts as a central switch between the signaling pathways activated by these second messengers with different cellular targets and opposite effects in numerous biological processes. Also plays an important role in the biosynthesis of complex lipids. Does not exhibit an acyl chain-dependent substrate specificity among diacylglycerol species. Can also phosphorylate 1-alkyl-2-acylglycerol in vitro but less efficiently and with a preference for alkylacylglycerols containing an arachidonoyl group. The biological processes it is involved in include T cell activation since it negatively regulates T-cell receptor signaling which is in part mediated by diacylglycerol. By generating phosphatidic acid, stimulates PIP5KIA activity which regulates actin polymerization. Through the same mechanism could also positively regulate insulin-induced translocation of SLC2A4 to the cell membrane. Regulates RASGRP1 activity. Its function is as follows. Does not regulate RASGRP1 activity. This Homo sapiens (Human) protein is Diacylglycerol kinase zeta.